The following is a 274-amino-acid chain: Diaminopimelate epimerase (274 aa).

Substrate is bound by residues N11 and N60. C69 serves as the catalytic Proton donor. Residues G70 to N71, N191, and E209 to R210 contribute to the substrate site. Catalysis depends on C218, which acts as the Proton acceptor. G219–S220 contributes to the substrate binding site.

This sequence belongs to the diaminopimelate epimerase family. Homodimer.

The protein resides in the cytoplasm. It carries out the reaction (2S,6S)-2,6-diaminopimelate = meso-2,6-diaminopimelate. It functions in the pathway amino-acid biosynthesis; L-lysine biosynthesis via DAP pathway; DL-2,6-diaminopimelate from LL-2,6-diaminopimelate: step 1/1. Functionally, catalyzes the stereoinversion of LL-2,6-diaminopimelate (L,L-DAP) to meso-diaminopimelate (meso-DAP), a precursor of L-lysine and an essential component of the bacterial peptidoglycan. In Caldanaerobacter subterraneus subsp. tengcongensis (strain DSM 15242 / JCM 11007 / NBRC 100824 / MB4) (Thermoanaerobacter tengcongensis), this protein is Diaminopimelate epimerase.